The following is a 902-amino-acid chain: Alanine--tRNA ligase (902 aa).

His-567, His-571, Cys-671, and His-675 together coordinate Zn(2+).

It belongs to the class-II aminoacyl-tRNA synthetase family. Zn(2+) serves as cofactor.

It localises to the cytoplasm. The enzyme catalyses tRNA(Ala) + L-alanine + ATP = L-alanyl-tRNA(Ala) + AMP + diphosphate. Catalyzes the attachment of alanine to tRNA(Ala) in a two-step reaction: alanine is first activated by ATP to form Ala-AMP and then transferred to the acceptor end of tRNA(Ala). Also edits incorrectly charged Ser-tRNA(Ala) and Gly-tRNA(Ala) via its editing domain. The chain is Alanine--tRNA ligase from Mycoplasmoides gallisepticum (strain R(low / passage 15 / clone 2)) (Mycoplasma gallisepticum).